We begin with the raw amino-acid sequence, 387 residues long: Arginine biosynthesis bifunctional protein ArgJ 2 (387 aa).

Positions 147, 169, 180, 259, 382, and 387 each coordinate substrate. The active-site Nucleophile is the T180.

Belongs to the ArgJ family. As to quaternary structure, heterotetramer of two alpha and two beta chains.

It is found in the cytoplasm. The catalysed reaction is N(2)-acetyl-L-ornithine + L-glutamate = N-acetyl-L-glutamate + L-ornithine. The enzyme catalyses L-glutamate + acetyl-CoA = N-acetyl-L-glutamate + CoA + H(+). The protein operates within amino-acid biosynthesis; L-arginine biosynthesis; L-ornithine and N-acetyl-L-glutamate from L-glutamate and N(2)-acetyl-L-ornithine (cyclic): step 1/1. It functions in the pathway amino-acid biosynthesis; L-arginine biosynthesis; N(2)-acetyl-L-ornithine from L-glutamate: step 1/4. Functionally, catalyzes two activities which are involved in the cyclic version of arginine biosynthesis: the synthesis of N-acetylglutamate from glutamate and acetyl-CoA as the acetyl donor, and of ornithine by transacetylation between N(2)-acetylornithine and glutamate. This chain is Arginine biosynthesis bifunctional protein ArgJ 2, found in Nostoc sp. (strain PCC 7120 / SAG 25.82 / UTEX 2576).